The following is a 291-amino-acid chain: Methionine aminopeptidase (291 aa).

His118 provides a ligand contact to substrate. A divalent metal cation is bound by residues Asp135, Asp146, and His209. His216 is a substrate binding site. A divalent metal cation contacts are provided by Glu241 and Glu273.

The protein belongs to the peptidase M24A family. Methionine aminopeptidase type 1 subfamily. Monomer. Co(2+) serves as cofactor. The cofactor is Zn(2+). Requires Mn(2+) as cofactor. Fe(2+) is required as a cofactor.

The catalysed reaction is Release of N-terminal amino acids, preferentially methionine, from peptides and arylamides.. Removes the N-terminal methionine from nascent proteins. The N-terminal methionine is often cleaved when the second residue in the primary sequence is small and uncharged (Met-Ala-, Cys, Gly, Pro, Ser, Thr, or Val). Requires deformylation of the N(alpha)-formylated initiator methionine before it can be hydrolyzed. The protein is Methionine aminopeptidase of Chlamydia muridarum (strain MoPn / Nigg).